The sequence spans 296 residues: D-alanine--D-alanine ligase (296 aa).

The ATP-grasp domain maps to 103 to 293 (KEILMHHRMP…FDSFVKRIIE (191 aa)). 129-180 (ISFPAAVKPSSGGSSIATFKVKSIQELKHAYEEASKYGEVMIEQWVTGKEIT) is a binding site for ATP. Mg(2+) contacts are provided by D247, E260, and N262.

This sequence belongs to the D-alanine--D-alanine ligase family. Mg(2+) is required as a cofactor. Requires Mn(2+) as cofactor.

It is found in the cytoplasm. It carries out the reaction 2 D-alanine + ATP = D-alanyl-D-alanine + ADP + phosphate + H(+). Its pathway is cell wall biogenesis; peptidoglycan biosynthesis. Cell wall formation. In Francisella tularensis subsp. holarctica (strain LVS), this protein is D-alanine--D-alanine ligase.